The primary structure comprises 828 residues: Phenylalanine--tRNA ligase beta subunit (828 aa).

The tRNA-binding domain occupies L43–L161. The tract at residues K203–N230 is disordered. One can recognise a B5 domain in the interval R436–P519. 3 residues coordinate Mg(2+): D497, D503, and D507. Residues P736 to R828 form the FDX-ACB domain.

It belongs to the phenylalanyl-tRNA synthetase beta subunit family. Type 1 subfamily. Tetramer of two alpha and two beta subunits. The cofactor is Mg(2+).

It localises to the cytoplasm. It catalyses the reaction tRNA(Phe) + L-phenylalanine + ATP = L-phenylalanyl-tRNA(Phe) + AMP + diphosphate + H(+). The polypeptide is Phenylalanine--tRNA ligase beta subunit (Aster yellows witches'-broom phytoplasma (strain AYWB)).